A 489-amino-acid polypeptide reads, in one-letter code: Cytochrome P450 monooxygenase tazI (489 aa).

Residue Cys433 coordinates heme.

It belongs to the cytochrome P450 family. Requires heme as cofactor.

It participates in secondary metabolite biosynthesis. Functionally, cytochrome P450 monooxygenase; part of the gene cluster that mediates the biosynthesis of azaterrilone A and other azaphilones, a class of fungal metabolites characterized by a highly oxygenated pyrano-quinone bicyclic core and exhibiting a broad range of bioactivities. The first step of the pathway begins with the non-reducing polyketide synthase tazA that assembles one acetyl-CoA starter unit, five malonyl-CoA units, and catalyzes a series of Claisen condensations, methylation, PT-mediated cyclization, and finally releases the first hexaketide precursor through the R-domain. The tazA product then undergoes reduction on its terminal ketone and the following pyran-ring formation by yet undetermined enzyme(s). Dehydration and enoyl reduction, possibly involving the trans-enoyl reductase tazE leads to the next intermediate. TazD is predicted as an acetyltransferase and might catalyze the acetylation steps leading to the synthesis of azaterrilone A. Azaterrilone A is not the final product of the taz pathway and both the highly reducing polyketide synthase tazB and the dual enzyme tazHJ catalyze late steps of the pathway, leading to the production of the 2 final stereoisomers that contain additional polyketide modification whose structures have still to be determined. The sequence is that of Cytochrome P450 monooxygenase tazI from Aspergillus terreus (strain NIH 2624 / FGSC A1156).